Consider the following 643-residue polypeptide: 1-deoxy-D-xylulose-5-phosphate synthase (643 aa).

Residues His-78 and 119-121 (AHS) each bind thiamine diphosphate. Asp-150 is a Mg(2+) binding site. Thiamine diphosphate-binding positions include 151-152 (GS), Asn-179, Tyr-288, and Glu-370. Residue Asn-179 participates in Mg(2+) binding.

Belongs to the transketolase family. DXPS subfamily. As to quaternary structure, homodimer. The cofactor is Mg(2+). Requires thiamine diphosphate as cofactor.

It carries out the reaction D-glyceraldehyde 3-phosphate + pyruvate + H(+) = 1-deoxy-D-xylulose 5-phosphate + CO2. It functions in the pathway metabolic intermediate biosynthesis; 1-deoxy-D-xylulose 5-phosphate biosynthesis; 1-deoxy-D-xylulose 5-phosphate from D-glyceraldehyde 3-phosphate and pyruvate: step 1/1. In terms of biological role, catalyzes the acyloin condensation reaction between C atoms 2 and 3 of pyruvate and glyceraldehyde 3-phosphate to yield 1-deoxy-D-xylulose-5-phosphate (DXP). In Brucella suis (strain ATCC 23445 / NCTC 10510), this protein is 1-deoxy-D-xylulose-5-phosphate synthase.